Consider the following 394-residue polypeptide: Elongation factor Tu 1 (394 aa).

Residues 10–204 (KPHVNVGTIG…FLDSYIPEPE (195 aa)) form the tr-type G domain. The segment at 19–26 (GHVDHGKT) is G1. Residue 19–26 (GHVDHGKT) participates in GTP binding. Threonine 26 is a binding site for Mg(2+). The tract at residues 60-64 (GITIN) is G2. Positions 81–84 (DCPG) are G3. Residues 81–85 (DCPGH) and 136–139 (NKCD) each bind GTP. The tract at residues 136–139 (NKCD) is G4. The segment at 174-176 (SAL) is G5.

It belongs to the TRAFAC class translation factor GTPase superfamily. Classic translation factor GTPase family. EF-Tu/EF-1A subfamily. In terms of assembly, monomer.

It localises to the cytoplasm. It carries out the reaction GTP + H2O = GDP + phosphate + H(+). Functionally, GTP hydrolase that promotes the GTP-dependent binding of aminoacyl-tRNA to the A-site of ribosomes during protein biosynthesis. This is Elongation factor Tu 1 from Shigella sonnei (strain Ss046).